The sequence spans 107 residues: Large ribosomal subunit protein uL24 (107 aa).

Belongs to the universal ribosomal protein uL24 family. Part of the 50S ribosomal subunit.

Functionally, one of two assembly initiator proteins, it binds directly to the 5'-end of the 23S rRNA, where it nucleates assembly of the 50S subunit. Its function is as follows. One of the proteins that surrounds the polypeptide exit tunnel on the outside of the subunit. This is Large ribosomal subunit protein uL24 from Pelotomaculum thermopropionicum (strain DSM 13744 / JCM 10971 / SI).